The chain runs to 391 residues: MFGTATRESATRVLLLGSGELGKEVAIECQRLGLEVIACDRYPDAPAMQVAHRSYVFDMLDASELEKVIAAEQPAFVVPEIEAIATDKLVELEEQGLNVVPSAKATKLTMNREGIRRLAAEELGLTTSPYRFADNYQQFVEAVEAVSIPCVVKPVMSSSGKGQSVIKSPADIEKAWQYAQEGGRTGAGRVIVEGFIDFDYEITLLTVRAVDGVHFCAPIGHRQEDGDYRESWQPQQMSENAIKAAEYTAEQVVNALGGYGIFGVELFVKGDKVIFNEVSPRPHDTGLVTLISQEMSEFALHVRAFTGMPVNKIVQYGPSASAVILGNGQSENLRFDGMSDALEQPQTQLRLFGKPDINGRRRLGVVLTRRSSTEKAVDAAIESAKKIKIIY.

N(1)-(5-phospho-beta-D-ribosyl)glycinamide contacts are provided by residues 20–21 (EL) and E80. ATP is bound by residues R112, K153, 158–163 (SSGKGQ), 193–196 (EGFI), and E201. Residues 117 to 306 (RLAAEELGLT…EFALHVRAFT (190 aa)) enclose the ATP-grasp domain. E265 and E277 together coordinate Mg(2+). N(1)-(5-phospho-beta-D-ribosyl)glycinamide contacts are provided by residues D284, K354, and 361-362 (RR).

The protein belongs to the PurK/PurT family. Homodimer.

It catalyses the reaction N(1)-(5-phospho-beta-D-ribosyl)glycinamide + formate + ATP = N(2)-formyl-N(1)-(5-phospho-beta-D-ribosyl)glycinamide + ADP + phosphate + H(+). It participates in purine metabolism; IMP biosynthesis via de novo pathway; N(2)-formyl-N(1)-(5-phospho-D-ribosyl)glycinamide from N(1)-(5-phospho-D-ribosyl)glycinamide (formate route): step 1/1. Involved in the de novo purine biosynthesis. Catalyzes the transfer of formate to 5-phospho-ribosyl-glycinamide (GAR), producing 5-phospho-ribosyl-N-formylglycinamide (FGAR). Formate is provided by PurU via hydrolysis of 10-formyl-tetrahydrofolate. This chain is Formate-dependent phosphoribosylglycinamide formyltransferase, found in Vibrio vulnificus (strain CMCP6).